The chain runs to 473 residues: Phosphatidylserine synthase 1 (473 aa).

A2 carries the N-acetylalanine modification. At 2–35 (ASCVGSRTLSKDDVNYRMHFRMINEQQVEDITID) the chain is on the cytoplasmic side. Residues 36–56 (FFYRPHTITLLSFTIISLMYF) traverse the membrane as a helical segment. Residues 57-72 (AFTRDDSVPEDNIWRG) are Lumenal-facing. A helical membrane pass occupies residues 73–93 (ILSVIFFFLIISVLAFPNGPF). The Cytoplasmic segment spans residues 94–102 (TRPHPALWR). Residues 103–123 (MVFGLSVLYFLFLVFLLFLNF) form a helical membrane-spanning segment. Topologically, residues 124-186 (EQVKSLMYWL…AMKALLIRSY (63 aa)) are lumenal. The chain crosses the membrane as a helical span at residues 187-207 (GLCWTISITWELTELFFMHLL). Topologically, residues 208–216 (PNFAECWWD) are cytoplasmic. A helical transmembrane segment spans residues 217–237 (QVILDILLCNGGGIWLGMVVC). At 238-286 (RFLEMRTYHWASFKDIHTTTGKIKRAVLQFTPASWTYVRWFDPKSSFQR) the chain is on the lumenal side. A helical transmembrane segment spans residues 287–307 (VAGIYLFMIIWQLTELNTFFL). The Cytoplasmic portion of the chain corresponds to 308–319 (KHIFVFQASHPL). The helical transmembrane segment at 320-342 (SWGRILFIGCITAPTVRQYYAYL) threads the bilayer. At 343 to 355 (TDTQCKRVGTQCW) the chain is on the lumenal side. A helical transmembrane segment spans residues 356–376 (VFGVIGFLEAIVCIKFGQDLF). Over 377–383 (SKTQILY) the chain is Cytoplasmic. A helical transmembrane segment spans residues 384-404 (VMLWLLCVAFTTFLCLYGMVW). Topologically, residues 405 to 473 (YAEHYGHREK…SKVTNGVGKK (69 aa)) are lumenal. Phosphoserine occurs at positions 417, 425, 442, and 454. The segment at 428 to 473 (ISWHHGKGSKGSEDSPPKHSSNHESHSSRRRNRHSKSKVTNGVGKK) is disordered. Residues 437–454 (KGSEDSPPKHSSNHESHS) are compositionally biased toward basic and acidic residues. The segment covering 455–464 (SRRRNRHSKS) has biased composition (basic residues).

The protein belongs to the phosphatidyl serine synthase family. In terms of tissue distribution, expressed in kidney, testis, lung, skeletal muscle, liver brain, heart and spleen with highest expression in testis, liver, heart and brain.

It localises to the endoplasmic reticulum membrane. It carries out the reaction a 1,2-diacyl-sn-glycero-3-phosphoethanolamine + L-serine = a 1,2-diacyl-sn-glycero-3-phospho-L-serine + ethanolamine. The enzyme catalyses a 1,2-diacyl-sn-glycero-3-phosphocholine + L-serine = a 1,2-diacyl-sn-glycero-3-phospho-L-serine + choline. Its pathway is phospholipid metabolism; phosphatidylserine biosynthesis. Its activity is regulated as follows. Potently inhibited by choline in the mitochondria-associated membrane (MAM). Very little inhibition by choline in the endoplasmic reticulum (ER) per se. Functionally, catalyzes a base-exchange reaction in which the polar head group of phosphatidylethanolamine (PE) or phosphatidylcholine (PC) is replaced by L-serine. Catalyzes mainly the conversion of phosphatidylcholine. Also converts, in vitro and to a lesser extent, phosphatidylethanolamine. The chain is Phosphatidylserine synthase 1 (Ptdss1) from Mus musculus (Mouse).